Reading from the N-terminus, the 204-residue chain is Probable GTP-binding protein EngB (204 aa).

The EngB-type G domain maps to 23-195 (TLPEIAFVGR…ASALMQLLAM (173 aa)). GTP-binding positions include 31–38 (GRSNVGKS), 58–62 (GRTRE), 76–79 (DLPG), 143–146 (TKID), and 174–176 (FSA). Mg(2+) contacts are provided by serine 38 and threonine 60.

Belongs to the TRAFAC class TrmE-Era-EngA-EngB-Septin-like GTPase superfamily. EngB GTPase family. Mg(2+) is required as a cofactor.

In terms of biological role, necessary for normal cell division and for the maintenance of normal septation. The chain is Probable GTP-binding protein EngB from Gemmatimonas aurantiaca (strain DSM 14586 / JCM 11422 / NBRC 100505 / T-27).